A 389-amino-acid chain; its full sequence is TelA-like protein SH1505 (389 aa).

This sequence belongs to the TelA family.

The sequence is that of TelA-like protein SH1505 from Staphylococcus haemolyticus (strain JCSC1435).